A 348-amino-acid chain; its full sequence is ELAV-like protein 3 (348 aa).

3 consecutive RRM domains span residues 34 to 112, 120 to 200, and 265 to 343; these read TNLI…YARP, ANLY…FANN, and WCIF…FKTS.

The protein belongs to the RRM elav family. In terms of tissue distribution, expression is neural-specific in both embryos and adults. Expressed from neurula stage onwards in primary motor-, inter- and sensory-neurons. Expressed in the closing neural tube and motor neurons of stage 18 embryos, and primarily in the ventricular zone and dorsal region of the tailbud and adult brain. Expressed from stage 26 onwards in the differentiating ganglion cell layer of the retina, extending to the inner nuclear layer at later stages.

Its function is as follows. RNA-binding protein that binds to AU-rich element (ARE) sequences of target mRNAs. May also bind poly-A tracts via RRM 3. May be involved in neuronal differentiation and maintenance. This is ELAV-like protein 3 (elavl3) from Xenopus laevis (African clawed frog).